The primary structure comprises 218 residues: Testis expressed protein 56 (218 aa).

This is Testis expressed protein 56 (Tex56) from Rattus norvegicus (Rat).